Reading from the N-terminus, the 336-residue chain is G patch domain and ankyrin repeat-containing protein 1 homolog (336 aa).

ANK repeat units lie at residues 123-152 and 156-185; these read FGWT…QVET and SGNT…LEET. One can recognise a G-patch domain in the interval 240-286; it reads AKNRGLQLMVKQGWDQEHGLGPSQSGRLYPVKTVLRKQRTGLGIEQQ.

The chain is G patch domain and ankyrin repeat-containing protein 1 homolog from Drosophila melanogaster (Fruit fly).